We begin with the raw amino-acid sequence, 461 residues long: Deoxyguanosinetriphosphate triphosphohydrolase-like protein (461 aa).

Residues 22–41 (ERFLPDPPREKDNRPPFRRD) form a disordered region. Residues 24–41 (FLPDPPREKDNRPPFRRD) show a composition bias toward basic and acidic residues. Residues 72 to 285 (RLTHSLEVAQ…MELADDIAYG (214 aa)) enclose the HD domain.

This sequence belongs to the dGTPase family. Type 2 subfamily.

This Haemophilus influenzae (strain PittEE) protein is Deoxyguanosinetriphosphate triphosphohydrolase-like protein.